The sequence spans 562 residues: Cell division protein FtsZ (562 aa).

GTP is bound by residues 23–27, 110–112, Glu-141, Arg-145, and Asp-189; these read GAGGN and GTG. A compositionally biased stretch (low complexity) spans 404–413; the sequence is PAAARPAQQP. Disordered stretches follow at residues 404 to 428 and 462 to 562; these read PAAARPAQQPMAETFRPDPQLRLDP and ETAQ…RQAN. The segment covering 418–428 has biased composition (basic and acidic residues); the sequence is FRPDPQLRLDP. Low complexity-rich tracts occupy residues 464–486 and 500–510; these read AQAAPQPQRQPEIQRQQAPQPQR and GLLRRPAAAQP.

Belongs to the FtsZ family. In terms of assembly, homodimer. Polymerizes to form a dynamic ring structure in a strictly GTP-dependent manner. Interacts directly with several other division proteins. Interacts with FtsZ-like protein (also called FtsZm).

Its subcellular location is the cytoplasm. Its function is as follows. Essential cell division protein that forms a contractile ring structure (Z ring) at the future cell division site. The regulation of the ring assembly controls the timing and the location of cell division. One of the functions of the FtsZ ring is to recruit other cell division proteins to the septum to produce a new cell wall between the dividing cells. Binds GTP and shows GTPase activity. Mild overexpression impairs cell division, leading to very elongated cells. Isolated protein forms filaments and bundles in the presence of GTP. This is Cell division protein FtsZ from Magnetospirillum gryphiswaldense (strain DSM 6361 / JCM 21280 / NBRC 15271 / MSR-1).